Consider the following 371-residue polypeptide: Putative ribonuclease 3 (371 aa).

In terms of domain architecture, RNase III spans 10–136 (AKSVKDKYIP…FLGAVCMAVD (127 aa)).

It belongs to the IIV-6 142R family.

It catalyses the reaction Endonucleolytic cleavage to 5'-phosphomonoester.. Functionally, digests double-stranded RNA. The sequence is that of Putative ribonuclease 3 from Frog virus 3 (isolate Goorha) (FV-3).